The following is a 68-amino-acid chain: Cytotoxic linear peptide IsCT (68 aa).

Residues 1-23 form the signal peptide; sequence MKTQFAILLVALVLFQMFAQSDA. A Phenylalanine amide modification is found at Phe36. A propeptide spanning residues 40–68 is cleaved from the precursor; the sequence is GLSDLDGLDELFDGEISKADRDFLRELMR.

This sequence belongs to the non-disulfide-bridged peptide (NDBP) superfamily. Short antimicrobial peptide (group 4) family. Post-translationally, isCTf is an enzymatic proteolytic cleavage product of IsCT by the proteases present in the venom. Expressed by the venom gland.

It is found in the secreted. It localises to the target cell membrane. Its function is as follows. Shows weak hemolytic activity and antibacterial activity against both Gram-positive and Gram-negative bacteria probably by forming pores in the cell membrane. IsCT adopts an amphipathic alpha-helical structure. Functionally, shows neither hemolytic, nor antibacterial activities, probably because it cannot adopt amphipathic alpha-helical structure. This chain is Cytotoxic linear peptide IsCT, found in Opisthacanthus madagascariensis (Scorpion).